The sequence spans 200 residues: Large ribosomal subunit protein uL13 (200 aa).

It belongs to the universal ribosomal protein uL13 family. In terms of assembly, component of the large ribosomal subunit. Mature ribosomes consist of a small (40S) and a large (60S) subunit. The 40S subunit contains about 32 different proteins and 1 molecule of RNA (18S). The 60S subunit contains 45 different proteins and 3 molecules of RNA (25S, 5.8S and 5S).

The protein localises to the cytoplasm. Its function is as follows. Component of the ribosome, a large ribonucleoprotein complex responsible for the synthesis of proteins in the cell. The small ribosomal subunit (SSU) binds messenger RNAs (mRNAs) and translates the encoded message by selecting cognate aminoacyl-transfer RNA (tRNA) molecules. The large subunit (LSU) contains the ribosomal catalytic site termed the peptidyl transferase center (PTC), which catalyzes the formation of peptide bonds, thereby polymerizing the amino acids delivered by tRNAs into a polypeptide chain. The nascent polypeptides leave the ribosome through a tunnel in the LSU and interact with protein factors that function in enzymatic processing, targeting, and the membrane insertion of nascent chains at the exit of the ribosomal tunnel. This Candida albicans (strain SC5314 / ATCC MYA-2876) (Yeast) protein is Large ribosomal subunit protein uL13.